The sequence spans 430 residues: Adenylosuccinate synthetase (430 aa).

Residues 13-19 (GDEGKGK) and 41-43 (GHT) each bind GTP. The active-site Proton acceptor is D14. The Mg(2+) site is built by D14 and G41. IMP is bound by residues 14 to 17 (DEGK), 39 to 42 (NAGH), T130, R144, Q225, T240, and R304. Residue H42 is the Proton donor of the active site. A substrate-binding site is contributed by 300 to 306 (ASTGRPR). GTP contacts are provided by residues R306, 332-334 (KLD), and 414-416 (STG).

Belongs to the adenylosuccinate synthetase family. In terms of assembly, homodimer. Requires Mg(2+) as cofactor.

It is found in the cytoplasm. It catalyses the reaction IMP + L-aspartate + GTP = N(6)-(1,2-dicarboxyethyl)-AMP + GDP + phosphate + 2 H(+). It participates in purine metabolism; AMP biosynthesis via de novo pathway; AMP from IMP: step 1/2. Plays an important role in the de novo pathway of purine nucleotide biosynthesis. Catalyzes the first committed step in the biosynthesis of AMP from IMP. The polypeptide is Adenylosuccinate synthetase (Xylella fastidiosa (strain 9a5c)).